A 425-amino-acid polypeptide reads, in one-letter code: Succinyl-diaminopimelate desuccinylase (425 aa).

Zn(2+) is bound at residue His-96. Asp-98 is a catalytic residue. Asp-129 contacts Zn(2+). Residue Glu-163 is the Proton acceptor of the active site. Glu-164, Glu-192, and His-378 together coordinate Zn(2+).

The protein belongs to the peptidase M20A family. DapE subfamily. In terms of assembly, homodimer. Requires Zn(2+) as cofactor. The cofactor is Co(2+).

The catalysed reaction is N-succinyl-(2S,6S)-2,6-diaminopimelate + H2O = (2S,6S)-2,6-diaminopimelate + succinate. The protein operates within amino-acid biosynthesis; L-lysine biosynthesis via DAP pathway; LL-2,6-diaminopimelate from (S)-tetrahydrodipicolinate (succinylase route): step 3/3. Its function is as follows. Catalyzes the hydrolysis of N-succinyl-L,L-diaminopimelic acid (SDAP), forming succinate and LL-2,6-diaminopimelate (DAP), an intermediate involved in the bacterial biosynthesis of lysine and meso-diaminopimelic acid, an essential component of bacterial cell walls. This chain is Succinyl-diaminopimelate desuccinylase, found in Polaromonas sp. (strain JS666 / ATCC BAA-500).